A 500-amino-acid polypeptide reads, in one-letter code: Glycerol kinase (500 aa).

ADP is bound at residue threonine 13. 3 residues coordinate ATP: threonine 13, threonine 14, and serine 15. Threonine 13 contacts sn-glycerol 3-phosphate. Residue arginine 17 coordinates ADP. Sn-glycerol 3-phosphate-binding residues include arginine 83, glutamate 84, tyrosine 135, and aspartate 244. Residues arginine 83, glutamate 84, tyrosine 135, aspartate 244, and glutamine 245 each coordinate glycerol. ADP is bound by residues threonine 266 and glycine 309. The ATP site is built by threonine 266, glycine 309, glutamine 313, and glycine 410. Residues glycine 410 and asparagine 414 each coordinate ADP.

This sequence belongs to the FGGY kinase family.

The enzyme catalyses glycerol + ATP = sn-glycerol 3-phosphate + ADP + H(+). It participates in polyol metabolism; glycerol degradation via glycerol kinase pathway; sn-glycerol 3-phosphate from glycerol: step 1/1. With respect to regulation, inhibited by fructose 1,6-bisphosphate (FBP). Functionally, key enzyme in the regulation of glycerol uptake and metabolism. Catalyzes the phosphorylation of glycerol to yield sn-glycerol 3-phosphate. This Burkholderia cenocepacia (strain HI2424) protein is Glycerol kinase.